We begin with the raw amino-acid sequence, 150 residues long: Probable NADH dehydrogenase [ubiquinone] 1 alpha subcomplex subunit 5 (150 aa).

It belongs to the complex I NDUFA5 subunit family. Complex I is composed of 45 different subunits.

It is found in the mitochondrion inner membrane. Functionally, accessory subunit of the mitochondrial membrane respiratory chain NADH dehydrogenase (Complex I), that is believed not to be involved in catalysis. Complex I functions in the transfer of electrons from NADH to the respiratory chain. The immediate electron acceptor for the enzyme is believed to be ubiquinone. The chain is Probable NADH dehydrogenase [ubiquinone] 1 alpha subcomplex subunit 5 from Caenorhabditis elegans.